Here is a 439-residue protein sequence, read N- to C-terminus: Dihydroorotate dehydrogenase (quinone), mitochondrial (439 aa).

A mitochondrion-targeting transit peptide spans 1–22 (MMHRVGFNVIGRRSFFTVNARR). The chain crosses the membrane as a helical span at residues 37–53 (LTALLLAGSAGYLYFMN). FMN is bound by residues 119–123 (AGLDK) and serine 143. Residue lysine 123 coordinates substrate. 168–172 (NRYGF) is a substrate binding site. Asparagine 215 and asparagine 245 together coordinate FMN. 245 to 250 (NVSSPN) contributes to the substrate binding site. Catalysis depends on serine 248, which acts as the Nucleophile. 2 residues coordinate FMN: lysine 296 and serine 324. 325-326 (NT) provides a ligand contact to substrate. Residues glycine 350, glycine 380, and 401-402 (YT) contribute to the FMN site.

The protein belongs to the dihydroorotate dehydrogenase family. Type 2 subfamily. FMN serves as cofactor.

The protein localises to the mitochondrion inner membrane. It catalyses the reaction (S)-dihydroorotate + a quinone = orotate + a quinol. It participates in pyrimidine metabolism; UMP biosynthesis via de novo pathway; orotate from (S)-dihydroorotate (quinone route): step 1/1. In terms of biological role, catalyzes the conversion of dihydroorotate to orotate with quinone as electron acceptor. In Candida glabrata (strain ATCC 2001 / BCRC 20586 / JCM 3761 / NBRC 0622 / NRRL Y-65 / CBS 138) (Yeast), this protein is Dihydroorotate dehydrogenase (quinone), mitochondrial (URA9).